The sequence spans 887 residues: Valine--tRNA ligase (887 aa).

A 'HIGH' region motif is present at residues 47–57; it reads PNVTGALHMGH. Positions 527–531 match the 'KMSKS' region motif; that stretch reads KMSKS. Lysine 530 is an ATP binding site. The stretch at 817–885 forms a coiled coil; it reads LVNVEEEEKR…LLASLEKIRK (69 aa).

It belongs to the class-I aminoacyl-tRNA synthetase family. ValS type 1 subfamily. In terms of assembly, monomer.

The protein localises to the cytoplasm. It catalyses the reaction tRNA(Val) + L-valine + ATP = L-valyl-tRNA(Val) + AMP + diphosphate. In terms of biological role, catalyzes the attachment of valine to tRNA(Val). As ValRS can inadvertently accommodate and process structurally similar amino acids such as threonine, to avoid such errors, it has a 'posttransfer' editing activity that hydrolyzes mischarged Thr-tRNA(Val) in a tRNA-dependent manner. The sequence is that of Valine--tRNA ligase from Geobacter sulfurreducens (strain ATCC 51573 / DSM 12127 / PCA).